A 472-amino-acid chain; its full sequence is Argininosuccinate lyase (472 aa).

It belongs to the lyase 1 family. Argininosuccinate lyase subfamily.

The protein localises to the cytoplasm. It carries out the reaction 2-(N(omega)-L-arginino)succinate = fumarate + L-arginine. It participates in amino-acid biosynthesis; L-arginine biosynthesis; L-arginine from L-ornithine and carbamoyl phosphate: step 3/3. The protein is Argininosuccinate lyase of Syntrophus aciditrophicus (strain SB).